The sequence spans 290 residues: Glutamate racemase (290 aa).

Substrate contacts are provided by residues 32-33 (DS) and 64-65 (YG). Residue Cys-96 is the Proton donor/acceptor of the active site. 97–98 (NT) provides a ligand contact to substrate. Cys-208 serves as the catalytic Proton donor/acceptor. 209–210 (TH) serves as a coordination point for substrate.

Belongs to the aspartate/glutamate racemases family.

It carries out the reaction L-glutamate = D-glutamate. Its pathway is cell wall biogenesis; peptidoglycan biosynthesis. In terms of biological role, provides the (R)-glutamate required for cell wall biosynthesis. This Sodalis glossinidius (strain morsitans) protein is Glutamate racemase.